The chain runs to 350 residues: Protein RecA (350 aa).

65-72 (GPESSGKT) lines the ATP pocket.

This sequence belongs to the RecA family.

It is found in the cytoplasm. Functionally, can catalyze the hydrolysis of ATP in the presence of single-stranded DNA, the ATP-dependent uptake of single-stranded DNA by duplex DNA, and the ATP-dependent hybridization of homologous single-stranded DNAs. It interacts with LexA causing its activation and leading to its autocatalytic cleavage. This chain is Protein RecA, found in Nautilia profundicola (strain ATCC BAA-1463 / DSM 18972 / AmH).